Consider the following 88-residue polypeptide: Apolipoprotein C-I (88 aa).

The signal sequence occupies residues 1–26 (MRLFLSLPVLVVVLAMVLEGPAPTQA).

This sequence belongs to the apolipoprotein C1 family.

It localises to the secreted. Inhibitor of lipoprotein binding to the low density lipoprotein (LDL) receptor, LDL receptor-related protein, and very low density lipoprotein (VLDL) receptor. Associates with high density lipoproteins (HDL) and the triacylglycerol-rich lipoproteins in the plasma and makes up about 10% of the protein of the VLDL and 2% of that of HDL. Appears to interfere directly with fatty acid uptake and is also the major plasma inhibitor of cholesteryl ester transfer protein (CETP). Binds free fatty acids and reduces their intracellular esterification. Modulates the interaction of APOE with beta-migrating VLDL and inhibits binding of beta-VLDL to the LDL receptor-related protein. This is Apolipoprotein C-I (APOC1) from Mirounga angustirostris (Northern elephant seal).